A 284-amino-acid polypeptide reads, in one-letter code: Formamidopyrimidine-DNA glycosylase (284 aa).

Residue proline 2 is the Schiff-base intermediate with DNA of the active site. The active-site Proton donor is glutamate 3. The active-site Proton donor; for beta-elimination activity is the lysine 61. DNA-binding residues include histidine 95, arginine 114, and arginine 159. The FPG-type zinc finger occupies 244–278 (WVYGRKGQPCRVCNTPIERIRLAGRSTHFCPTCQR). Arginine 268 functions as the Proton donor; for delta-elimination activity in the catalytic mechanism.

The protein belongs to the FPG family. In terms of assembly, monomer. The cofactor is Zn(2+).

The enzyme catalyses Hydrolysis of DNA containing ring-opened 7-methylguanine residues, releasing 2,6-diamino-4-hydroxy-5-(N-methyl)formamidopyrimidine.. It carries out the reaction 2'-deoxyribonucleotide-(2'-deoxyribose 5'-phosphate)-2'-deoxyribonucleotide-DNA = a 3'-end 2'-deoxyribonucleotide-(2,3-dehydro-2,3-deoxyribose 5'-phosphate)-DNA + a 5'-end 5'-phospho-2'-deoxyribonucleoside-DNA + H(+). Functionally, involved in base excision repair of DNA damaged by oxidation or by mutagenic agents. Acts as a DNA glycosylase that recognizes and removes damaged bases. Has a preference for oxidized purines, such as 7,8-dihydro-8-oxoguanine (8-oxoG). Has AP (apurinic/apyrimidinic) lyase activity and introduces nicks in the DNA strand. Cleaves the DNA backbone by beta-delta elimination to generate a single-strand break at the site of the removed base with both 3'- and 5'-phosphates. The chain is Formamidopyrimidine-DNA glycosylase from Gloeobacter violaceus (strain ATCC 29082 / PCC 7421).